A 1226-amino-acid polypeptide reads, in one-letter code: AF4/FMR2 family member 3 (1226 aa).

Residues 24-37 (RNALRRKERERRNQ) are compositionally biased toward basic and acidic residues. Disordered stretches follow at residues 24-65 (RNAL…GDEL), 116-164 (SRAQ…RATQ), 197-299 (ERPP…GETN), 323-496 (KVEP…SNQY), and 523-728 (IKST…SINA). Positions 42 to 52 (DDGTFNSSYSL) are enriched in polar residues. Over residues 123 to 132 (SSICSTTTST) the composition is skewed to low complexity. Polar residues-rich tracts occupy residues 251-261 (LKSSSETSVHC) and 334-344 (KDSQLVSSGHN). Residues 381–392 (QQAAQRTALRAL) show a composition bias toward low complexity. Residues 396–408 (AVVQQPNCRTSVP) are compositionally biased toward polar residues. The segment covering 409–445 (SSKGSSSSSSSGSSSSSSDSESSSGSDSETESSSSES) has biased composition (low complexity). Polar residues predominate over residues 485–496 (QNESHGSESNQY). A compositionally biased stretch (basic and acidic residues) spans 523–533 (IKSTCKEEQRP). Low complexity-rich tracts occupy residues 550-561 (PPAAVAVAVSAA) and 569-579 (CAPAENAPAPA). Residues 589-607 (RRTERTSAGDGANCHRPEE) are compositionally biased toward basic and acidic residues. Over residues 668 to 678 (TESSSSSSSSD) the composition is skewed to low complexity. Residues 692–705 (KAQTVAASASSGND) show a composition bias toward polar residues. Position 755 is a phosphoserine (serine 755). 3 disordered regions span residues 783-856 (PQEP…LSAN), 879-964 (PISP…RDCK), and 1100-1138 (AAQAPSPWGASGKSTGTPSPMSPNPSPASSVGSQGSLSN). Residues 830 to 842 (REIKKSQGEKDSS) show a composition bias toward basic and acidic residues. The span at 843-856 (SRLATSTSNTLSAN) shows a compositional bias: polar residues. The residue at position 881 (serine 881) is a Phosphoserine. Positions 894 to 909 (EDLTSSSRPNGNSLFT) are enriched in polar residues.

Belongs to the AF4 family. As to expression, preferentially expressed in lymphoid tissues, highest levels being found in the thymus.

It localises to the nucleus. In terms of biological role, putative transcription activator that may function in lymphoid development and oncogenesis. Binds, in vitro, to double-stranded DNA. This chain is AF4/FMR2 family member 3, found in Homo sapiens (Human).